The following is an 847-amino-acid chain: Glucans biosynthesis glucosyltransferase H (847 aa).

Residues methionine 1–arginine 138 lie on the Cytoplasmic side of the membrane. A helical transmembrane segment spans residues tyrosine 139–methionine 156. Over lysine 157–glycine 193 the chain is Periplasmic. A helical transmembrane segment spans residues isoleucine 194–phenylalanine 216. Over leucine 217–arginine 511 the chain is Cytoplasmic. Residues alanine 512 to serine 534 traverse the membrane as a helical segment. Over threonine 535 to alanine 567 the chain is Periplasmic. Residues isoleucine 568 to tryptophan 590 traverse the membrane as a helical segment. Topologically, residues cysteine 591–arginine 602 are cytoplasmic. A helical membrane pass occupies residues valine 603–histidine 625. The Periplasmic portion of the chain corresponds to threonine 626 to arginine 679. The helical transmembrane segment at phenylalanine 680–serine 702 threads the bilayer. Over arginine 703–glycine 847 the chain is Cytoplasmic.

This sequence belongs to the glycosyltransferase 2 family. OpgH subfamily.

It localises to the cell inner membrane. Its pathway is glycan metabolism; osmoregulated periplasmic glucan (OPG) biosynthesis. Involved in the biosynthesis of osmoregulated periplasmic glucans (OPGs). This chain is Glucans biosynthesis glucosyltransferase H, found in Salmonella typhi.